The sequence spans 487 residues: Probable cytochrome P450 313a5 (487 aa).

Residue Y223 is modified to Phosphotyrosine. C433 lines the heme pocket.

It belongs to the cytochrome P450 family. Requires heme as cofactor.

Its subcellular location is the endoplasmic reticulum membrane. The protein localises to the microsome membrane. May be involved in the metabolism of insect hormones and in the breakdown of synthetic insecticides. This is Probable cytochrome P450 313a5 (Cyp313a5) from Drosophila melanogaster (Fruit fly).